The following is a 236-amino-acid chain: 27 kDa hemolymph protein (236 aa).

The N-terminal stretch at 1–17 is a signal peptide; that stretch reads MMWKLIIVTILAVGVLC.

As to quaternary structure, monomer. In terms of tissue distribution, hemolymph.

Its subcellular location is the secreted. In Galleria mellonella (Greater wax moth), this protein is 27 kDa hemolymph protein.